A 303-amino-acid chain; its full sequence is ATP-dependent (S)-NAD(P)H-hydrate dehydratase (303 aa).

The region spanning 12–299 (QQQLVCSVIP…AEVRTAFSML (288 aa)) is the YjeF C-terminal domain. Residues Gly106 and 158-164 (NAVELDR) each bind (6S)-NADPHX. ATP contacts are provided by residues 194-198 (KGSED) and 213-222 (GSPRRCGGQG). Asp223 serves as a coordination point for (6S)-NADPHX.

It belongs to the NnrD/CARKD family. Mg(2+) serves as cofactor.

The enzyme catalyses (6S)-NADHX + ATP = ADP + phosphate + NADH + H(+). It catalyses the reaction (6S)-NADPHX + ATP = ADP + phosphate + NADPH + H(+). In terms of biological role, catalyzes the dehydration of the S-form of NAD(P)HX at the expense of ATP, which is converted to ADP. Together with NAD(P)HX epimerase, which catalyzes the epimerization of the S- and R-forms, the enzyme allows the repair of both epimers of NAD(P)HX, a damaged form of NAD(P)H that is a result of enzymatic or heat-dependent hydration. This is ATP-dependent (S)-NAD(P)H-hydrate dehydratase from Ixodes scapularis (Black-legged tick).